Consider the following 558-residue polypeptide: Glucose-6-phosphate isomerase (558 aa).

Ala-2 is subject to N-acetylalanine. Lys-12 carries the post-translational modification N6-acetyllysine. Lys-34 carries the post-translational modification N6-(2-hydroxyisobutyryl)lysine. The residue at position 107 (Ser-107) is a Phosphoserine. Thr-109 carries the post-translational modification Phosphothreonine. N6-acetyllysine is present on Lys-142. 159-160 (GS) contributes to the D-glucose 6-phosphate binding site. Ser-185 bears the Phosphoserine; by CK2 mark. 210–215 (SKTFTT) is a binding site for D-glucose 6-phosphate. Residue Thr-250 is modified to Phosphothreonine. D-glucose 6-phosphate-binding residues include Gln-354, Glu-358, and His-389. Residue Glu-358 is the Proton donor of the active site. His-389 is an active-site residue. Residue Lys-454 is modified to N6-acetyllysine; alternate. Lys-454 is subject to N6-malonyllysine; alternate. Position 454 is an N6-succinyllysine; alternate (Lys-454). Position 455 is a phosphoserine (Ser-455). Residue Lys-519 participates in D-glucose 6-phosphate binding. Lys-519 is an active-site residue.

The protein belongs to the GPI family. Homodimer in the catalytically active form, monomer in the secreted form. In terms of processing, phosphorylation at Ser-185 by CK2 has been shown to decrease enzymatic activity and may contribute to secretion by a non-classical secretory pathway. Post-translationally, ISGylated.

The protein localises to the cytoplasm. Its subcellular location is the secreted. The enzyme catalyses alpha-D-glucose 6-phosphate = beta-D-fructose 6-phosphate. Its pathway is carbohydrate degradation; glycolysis; D-glyceraldehyde 3-phosphate and glycerone phosphate from D-glucose: step 2/4. Functionally, in the cytoplasm, catalyzes the conversion of glucose-6-phosphate to fructose-6-phosphate, the second step in glycolysis, and the reverse reaction during gluconeogenesis. Besides it's role as a glycolytic enzyme, also acts as a secreted cytokine: acts as an angiogenic factor (AMF) that stimulates endothelial cell motility. Acts as a neurotrophic factor, neuroleukin, for spinal and sensory neurons. It is secreted by lectin-stimulated T-cells and induces immunoglobulin secretion. The chain is Glucose-6-phosphate isomerase from Sus scrofa (Pig).